A 448-amino-acid chain; its full sequence is Extracellular serine protease (448 aa).

The first 20 residues, 1–20, serve as a signal peptide directing secretion; that stretch reads MKLSHLSLAIISAITLAACG. Residues 87 to 109 are disordered; it reads KELENQASDDEVDPTKTGVVGNL.

Belongs to the peptidase S17 family. Requires a divalent metal cation as cofactor.

This enzyme is a chymotrypsin-like serine protease. Degrades a variety of substrates present in the skin and hoof of the sheep, including elastin, keratin, fibrinogen and collagen. It seems to play an important role in the pathogenesis of sheep footrot. The sequence is that of Extracellular serine protease (prvA) from Dichelobacter nodosus (Bacteroides nodosus).